The primary structure comprises 460 residues: Xyloglucan 6-xylosyltransferase 1 (460 aa).

Topologically, residues M1–Q20 are cytoplasmic. A helical; Signal-anchor for type II membrane protein membrane pass occupies residues G21–G40. Residues A41–T460 lie on the Lumenal side of the membrane. Residues G156 and D227–D229 each bind UDP-alpha-D-xylose. Mn(2+)-binding residues include D227 and D229. Residue H346 participates in substrate binding. UDP-alpha-D-xylose contacts are provided by H377, G380, and K382. H377 provides a ligand contact to Mn(2+). Substrate-binding positions include K382 and D389–Y390. N-linked (GlcNAc...) asparagine glycosylation is present at N431.

Belongs to the glycosyltransferase 34 family. Forms homodimer. Interacts with XXT2. Requires Mn(2+) as cofactor.

The protein localises to the golgi apparatus membrane. The enzyme catalyses Transfers an alpha-D-xylosyl residue from UDP-D-xylose to a glucose residue in xyloglucan, forming an alpha-(1-&gt;6)-D-xylosyl-D-glucose linkage.. The protein operates within protein modification; protein glycosylation. Its function is as follows. Xylosyltransferase specific to UDP-D-xylose that accepts both cellopentaose and cellohexaose as substrates, with a better use of cellohexaose, to produce xyloglucan. Adds preferentially the first xylosyl residue to the fourth glucosyl residue from the reducing end of both acceptors. Transfer one xylose mainly to the second glucose residue from the non-reducing end. The acceptor should have a minimum of four glucose residues. The chain is Xyloglucan 6-xylosyltransferase 1 from Arabidopsis thaliana (Mouse-ear cress).